Reading from the N-terminus, the 106-residue chain is Large ribosomal subunit protein bL21 (106 aa).

It belongs to the bacterial ribosomal protein bL21 family. As to quaternary structure, part of the 50S ribosomal subunit. Contacts protein L20.

In terms of biological role, this protein binds to 23S rRNA in the presence of protein L20. This chain is Large ribosomal subunit protein bL21, found in Fervidobacterium nodosum (strain ATCC 35602 / DSM 5306 / Rt17-B1).